Consider the following 4466-residue polypeptide: MADVVDPRLEFISEYILKSYKLKPDKWAKCINVEENKILMLEFLEKADNPQLVFTVNAAGLITPSYEFPSALKNTKAIYFIKKGREPVGKDNIKTTLVYGDLSYTPLEQLSALVDEILVPLLANPRNHEQWPVVVSQDVLRHVHNLKSSVYVVAGQVKGKTLLPLPVGSEKVETAAESEEKDDSYDRSLVHAIESVIIDWTHQIRDVLKRDSAQPLLEGLNPGPMVEINFWKAKCENLDCIFQQLRDPKVRKMKELLERTQSSYLPSFNNIERDVEAALTEAQDINCYLKPLIYQVESLDELEFPDMTPRLAPILHTVCLIWSNSDYYNTAPRIIVLLQEICNLLIDLCRTFLDPSEIFKLEPEESLEKVRGALAVLKAWRDLYDEHRAKLKDYFKDGREVKGWEFASPLVFTRMDNFTSRIETIQSLFETNVEFSKLEKTEMGSMKGRMLSQQVEKIHEEFQECAKVFTERPYDGLDPQCQEFLDDYEEFEKKVFDLDRRLGSILCQGFDDCCGLEAVFKMLDCYGPLLDRPVIRNDFECKYPVVLMLYDLELDQAKEIYDEHMRVEENDGNAPLNKNMPDVAGQLKWSAQLRDRISKPMGSLKHMEHPTGVRRILESEDAKVVFQKYEEMINLLNKYEQKVFENWTKGVDEVCKTNLDQSLITRDESTKLIKINFDPKLVAVLREVKYLQIRGEESIPESAASIYEKHETLRKYVANLDLTQAWYNKVRNTVLEVEFPLIEGQLADLDTRLKQAESELNWTSDSVWEYIQETRDQVHDLEKRVQQTKDNVDRIKKIMAEWTKQPLFERKELKKESLLALDDRQDRLKKRYAEISTAGEKIHSLIKENLGLFKADASSDIWKAYVDYVDDMVIDGFFNCIHCTLSYLLENTDPRHCAAPLFEARLELQVPDMIFNPSLDYGVADGFYDLVEMLISDTYKMASLVSRLAEHNGQEHYQADLEGMDDLSDVRNDLMDRVQTIMTKAQEYRNSFDNYAYLYVDDRKEFMRQFLLYNHVLTTEEIEAHAEDGVPECPPTLDQFKEQVDTYEKIYSEADEIEPEQVFDAWFRVDSKPFKAALLNIIKKWSFMFKQHLIDHVTNSLSELQEFIKVGNSGLTKTVEEGDYNGLVECMGHLMAVKERQAATDEMFEPIKQTIELLKTYDQEMSEEVHTQLQELPEQWNNTKKIAITVKQQVAPLQANEVAIIRRKCTSFDVRQHEFRERFRKEAPFIFTFEGPYQCLDRCHSEIYEMEEHMANLQESAGLFEVNMPDYKQLKACRREVRLLKALWDLIMIVRTSIEDWKTTPWLEINVEQMEMDCKKFAKDIRSLDKEMRAWDAYNGLDATVKNMLTSLRAVSELQNPAIRERHWQQLMAATKVKFTMDKETTLSDLLALNLHNFEDEVRNIVDKAVKEMGMEKVLKELNTTWSSMDFEYEPHSRTGISLLKSNEELIETLEDNQVQLQNLMTSKHIAHFLEEVSGWQKKLSTTDSVITIWFEVQRTWSHLESIFIGSEDIRNQLPEDSKRFDGIDTDFKELASEMEKTPNVVEATNRARLYDRLEAIQGSLVVCEKALAEYLETKRLAFPRFYFVSSADLLDILSQGNNPSQVQRHLSKLFDNMAKLKFKQDDEGNDTKLALGMYSKEGEYVDFDKECECTGQVEVWLNRVMDAMRSTVRSQFADAVVSYEEKPREQWLYDYPAQVALATTQVWWTTEVNISFARLEEGHENSMKDYNKKQIQQLNTLIGLLIGKLTKGDRQKIMTICTIDVHARDVVAMMVLKKVDNAQAFQWLSQLRHRWADDDKHCYANICDAQFKYSYEYLGNTPRLVITPLTDRCYITLTQSLHLVMSGAPAGPAGTGKTETTKDLGRALGIMVYVFNCSEQMDYKSCGNIYKGLSQTGAWGCFDEFNRISVEVLSVVAVQVKCVQDAIRDKKERFNFMGEEISLIPSVGIFITMNPGYAGRTELPENLKALFRPCAMVVPDFELICEIMLVAEGFLDARLLARKFITLYTLCKELLSKQDHYDWGLRAIKSVLVVAGSLKRGDPQRPEDQVLMRALRDFNVPKIVSDDTPVFMGLIGDLFPALDVPRRRDMDFEKVVKQSTLDLKLQAEDSFVLKVVQLEELLAVRHSVFVIGNAGTGKSQVLKVLNKTYSNMKRKPVLVDLNPKAVTNDELFGIINPATREWKDGLFSVIMRDMSNITHDGPKWIVLDGDIDPMWIESLNTVMDDNKVLTLASNERIPLTPSMRLLFEISHLKTATPATVSRAGILYINPSDLGWNPIVTSWIDTREVQSERANLTILFDKYLPTLLDTLRVRFKKIIPIPEQSMVQMLCYLLECLLTPENTPADCPKELYELYFVFASIWAFGGSMFQDQLVDYRVEFSKWWITEFKTIKFPNQGTVFDYFIDQESKKFLPWSEKVPVFELDPEIPMQAVLVHTNETTRVRFFMDLLMERGRPVMLVGNAGLGKSVLVGDKLSNLGEDSMVANVPFNYYTTSEMLQRVLEKPLEKKAGRNYGPPGTKKLVYFIDDMNMPEVDTYGTVQPHTLIRQHMDYKHWYDRQKLTLKEIHKCQYVSCMNPTAGSFTINSRLQRHFCVFALSFPGQDALSTIYNSILSQHLANISVSNALQKLSPTVVSATLDLHKKVAQSFLPTAIKFHYVFNLRDLSNVFQGLLYSGPDLLKAPIDFARLWMHECQRVYGDKMINDQDIEAFEKLVLEYAKKFFEDVDEEALKAKPNIHCHFATGIGDPKYMQVPNWPELNKILVEALDTYNEINAVMNLVLFEDAMQHVCRINRILESPRGNALLVGVGGSGKQSLARLASYISSLEVFQITLRKGYGIPDLKLDLATVCMKAGLKNIGTVFLMTDAQVSDEKFLVLINDLLASGEIPDLFADDEVENIIGGVRNEVKGMGLQDTRENCWKFFIDRLRRQLKTVLCFSPVGTTLRVRSRKFPAVVNCTSIDWFHEWPQEALVSVSMRFLDEVELLKGDIKKSIAEFMAYVHVSVNESSKLYLTNERRYNYTTPKSFLEQIKLYESLLSMKSKELTAKMERLENGLTKLQSTAQQVDDLKAKLASQEVELAQKNEDADKLIQVVGVETEKVSKEKAIADDEEKKVAIINEEVSKKAKDCSEDLAKAEPALLAAQEALNTLNKNNLTELKSFGSPPSAVLKVAAAVMVLLAPNGKIPKDRSWKAAKVVMNKVDAFLDSLINYDKENIHENCLKSIKEYLNDPEFEPEYIKGKSLAAGGLCSWVVNIVKFYNVYCDVEPKRIALQKANDELKAAQDKLALIKAKIAELDANLAELTAQFEKATSDKLKCQQEAEATSRTITLANRLVGGLASENVRWGEAVANFKIQEKTLPGDVLLITAFVSYIGCFTKTYRVDLQERMWLPFLKSQKDPIPITEGLDVLSMLTDDADIAVWNNEGLPSDRMSTENATILSNCQRWPLMIDPQLQGIKWIKQKYGDDLRVIRIGQRGYLDTIENAISSGDTVLIENMEESIDPVLDPVLGRNTIKKGRYIKIGDKEVEYNPDFRLILQTKLANPHYKPEMQAQTTLINFTVTRDGLEDQLLANVVAQERPDLEKLKSDLTKQQNDFKIILKELEDNLLSRLSSAEGNFLGDTALVENLETTKRTAAEISVKVEEAKVTEVKINEARELYRPAAARASLLYFILNDLNKINPIYQFSLKAFNTVFSLPIARAEPCEDVKERVVNLIDCITYSVFIYTTRGLFEADKLIFTTQVAFQVLLMKKEIAQNELDFLLRFPIQVGLTSPVDFLTNSAWGAIKSLSAMEDFRNLDRDIEGSAKRWKKFVESECPEKEKFPQEWKNKSALQKLCMMRALRADRMSYAVRNFIEEKLGSKYVEGRQVEFAKSYEETDPATPVFFILSPGVDPLKDVEALGKKLGFTFDNNNFHNVSLGQGQEIVAEQCMDLAAKEGHWVILQNIHLVAKWLSTLEKKLEQYSVGSHDSYRVYMSAEPAGSPEAHIIPQGILESSIKITNEPPTGMFANLHKALYNFNQDTLEMCAREAEFKVILFALCYFHAVVCERQKFGPQGWNRSYPFNTGDLTISVNVLYNYLEANSKVPWQDLRYLFGEIMYGGHITDDWDRRLCRTYLEEYMAPEMLDGELYLAPGFPVPPNSDYKGYHQYIDEILPPESPYLYGLHPNAEIGFLTTESDNLFKIVLELQPRDAGGGGGGGSSREEKIKSLLDEIVEKLPEEFNMMEIMAKVEDRTPYVVVAFQECERMNMLTSEIRRSLKELDLGLKGELTITPDMEDLSNALFLDQIPATWVKRAYPSLFGLTSWYADLLQRIKELEQWTADFALPNVVWLGGFFNPQSFLTAIMQSMARKNEWPLDKMCLQCDVTKKNKEDFSSAPREGSYVHGLFMEGARWDTQTNMIADARLKELAPNMPVIFIKAIPVDKQDTRNIYECPVYKTKQRGPTFVWTFNLKSKEKAAKWTLAGVALLLQV.

A stem region spans residues 1–1813; sequence MADVVDPRLE…YANICDAQFK (1813 aa). 154 to 161 serves as a coordination point for ATP; the sequence is AGQVKGKT. Coiled-coil stretches lie at residues 733-805, 1036-1056, 1306-1337, and 1443-1468; these read TVLE…WTKQ, TLDQ…EADE, WLEI…AWDA, and LLKS…MTSK. AAA regions lie at residues 1814 to 2035, 2095 to 2316, 2422 to 2669, and 2767 to 3016; these read YSYE…VLVV, KVVK…VRFK, ELDP…VFQG, and TYNE…ERRY. ATP is bound by residues 1852–1859, 2133–2140, 2460–2467, and 2805–2812; these read GPAGTGKT, GNAGTGKS, GNAGLGKS, and GVGGSGKQ. Coiled-coil stretches lie at residues 3033-3092, 3263-3325, and 3573-3642; these read SLLS…QVVG, EPKR…SRTI, and QERP…EEAK. A stalk region spans residues 3033 to 3325; it reads SLLSMKSKEL…QEAEATSRTI (293 aa). AAA stretches follow at residues 3409-3636 and 3846-4072; these read LTDD…EISV and VRNF…VLYN.

The protein belongs to the dynein heavy chain family. In terms of assembly, consists of at least two heavy chains (alpha and beta), three intermediate chains and several light chains.

It localises to the cell projection. The protein localises to the cilium. The protein resides in the flagellum. Its subcellular location is the cytoplasm. It is found in the cytoskeleton. It localises to the flagellum axoneme. Its function is as follows. Force generating protein of eukaryotic cilia and flagella. Produces force towards the minus ends of microtubules. Dynein has ATPase activity; the force-producing power stroke is thought to occur on release of ADP. This Tripneustes gratilla (Hawaian sea urchin) protein is Dynein beta chain, ciliary.